The primary structure comprises 350 residues: UDP-glucose 4-epimerase (350 aa).

NAD(+) contacts are provided by residues 13–15 (GYI), 34–38 (DNLCN), 67–68 (DI), Phe-89, and Lys-93. Position 133-135 (133-135 (SAT)) interacts with substrate. The active-site Proton acceptor is the Tyr-158. 2 residues coordinate NAD(+): Lys-162 and Tyr-186. Residues 186–188 (YFN), 207–209 (NNL), 225–227 (SVY), Arg-240, and 303–306 (RSGD) contribute to the substrate site.

The protein belongs to the NAD(P)-dependent epimerase/dehydratase family. As to quaternary structure, homodimer. NAD(+) is required as a cofactor.

It carries out the reaction UDP-alpha-D-glucose = UDP-alpha-D-galactose. The catalysed reaction is UDP-N-acetyl-alpha-D-glucosamine = UDP-N-acetyl-alpha-D-galactosamine. The protein operates within carbohydrate metabolism; galactose metabolism. Functionally, catalyzes two distinct but analogous reactions: the reversible epimerization of UDP-glucose to UDP-galactose and the reversible epimerization of UDP-N-acetylglucosamine to UDP-N-acetylgalactosamine. The reaction with UDP-Gal plays a critical role in the Leloir pathway of galactose catabolism in which galactose is converted to the glycolytic intermediate glucose 6-phosphate. It contributes to the catabolism of dietary galactose and enables the endogenous biosynthesis of both UDP-Gal and UDP-GalNAc when exogenous sources are limited. Both UDP-sugar interconversions are important in the synthesis of glycoproteins and glycolipids. The sequence is that of UDP-glucose 4-epimerase (Gale) from Drosophila melanogaster (Fruit fly).